The primary structure comprises 444 residues: Phosphoglucosamine mutase (444 aa).

The active-site Phosphoserine intermediate is serine 101. Mg(2+) is bound by residues serine 101, aspartate 240, aspartate 242, and aspartate 244. A Phosphoserine modification is found at serine 101.

Belongs to the phosphohexose mutase family. Mg(2+) is required as a cofactor. Activated by phosphorylation.

It catalyses the reaction alpha-D-glucosamine 1-phosphate = D-glucosamine 6-phosphate. Its function is as follows. Catalyzes the conversion of glucosamine-6-phosphate to glucosamine-1-phosphate. The sequence is that of Phosphoglucosamine mutase from Aeromonas hydrophila subsp. hydrophila (strain ATCC 7966 / DSM 30187 / BCRC 13018 / CCUG 14551 / JCM 1027 / KCTC 2358 / NCIMB 9240 / NCTC 8049).